The following is a 231-amino-acid chain: MFKIMLIEDDHTLFSEIKERLSQWSYDVFGVSNFEKVIEEFTSLKPDLVIIDIQLPKFDGFHWCRMIRQHSNVPIIFLSSRDHPTDMVMSMQLGADDFIQKPFHFDVLVAKIQAILRRVHNYTSEQTQLKTWCGATIDYESNTVSNHVGSIELSKNEFFILKRLIERKNKIVTRDDLIRSLWEDERFISDNTLTVNVNRLRKRLDELGLGAYIETKVGQGYMAKEDGNTHD.

Residues 3–116 enclose the Response regulatory domain; sequence KIMLIEDDHT…VLVAKIQAIL (114 aa). D52 is subject to 4-aspartylphosphate. A DNA-binding region (ompR/PhoB-type) is located at residues 127–225; it reads TQLKTWCGAT…KVGQGYMAKE (99 aa).

In terms of processing, phosphorylated by BceS.

It is found in the cytoplasm. Functionally, member of the two-component regulatory system BceS/BceR involved in the regulation of bacitracin resistance. When activated by BceS, binds to the upstream region of the bceAB promoter and up-regulates the expression of these two genes. The protein is Sensory transduction protein BceR (bceR) of Halalkalibacterium halodurans (strain ATCC BAA-125 / DSM 18197 / FERM 7344 / JCM 9153 / C-125) (Bacillus halodurans).